A 348-amino-acid polypeptide reads, in one-letter code: Dihydroorotase (348 aa).

Zn(2+)-binding residues include His-14 and His-16. Substrate contacts are provided by residues 16–18 (HLR) and Asn-42. The Zn(2+) site is built by Lys-100, His-137, and His-175. Lys-100 is modified (N6-carboxylysine). His-137 is a binding site for substrate. Position 220 (Leu-220) interacts with substrate. Asp-248 contacts Zn(2+). Residue Asp-248 is part of the active site. Substrate-binding residues include His-252 and Ala-264.

The protein belongs to the metallo-dependent hydrolases superfamily. DHOase family. Class II DHOase subfamily. As to quaternary structure, homodimer. The cofactor is Zn(2+).

The enzyme catalyses (S)-dihydroorotate + H2O = N-carbamoyl-L-aspartate + H(+). It participates in pyrimidine metabolism; UMP biosynthesis via de novo pathway; (S)-dihydroorotate from bicarbonate: step 3/3. In terms of biological role, catalyzes the reversible cyclization of carbamoyl aspartate to dihydroorotate. In Pseudomonas aeruginosa (strain LESB58), this protein is Dihydroorotase.